A 158-amino-acid polypeptide reads, in one-letter code: Transcription factor BTF3 homolog 4 (158 aa).

Residues 33–98 (TADDKKLQSS…AEAKPITEML (66 aa)) enclose the NAC-A/B domain. Residues 124–158 (VLDSKAPKSEDIDEEDDDVPDLAENFDEASKNEAN) are disordered. A compositionally biased stretch (acidic residues) spans 134–150 (DIDEEDDDVPDLAENFD).

Belongs to the NAC-beta family.

This is Transcription factor BTF3 homolog 4 (BTF3L4) from Gallus gallus (Chicken).